The sequence spans 69 residues: uncharacterized protein (69 aa).

Transmembrane regions (helical) follow at residues 7–29 and 44–66; these read LLSGLGLFLGVLAGLAGLILGSI and ALQVLNFLLLFISTIAGGFLGLL.

It localises to the cell membrane. This is an uncharacterized protein from Archaeoglobus fulgidus (strain ATCC 49558 / DSM 4304 / JCM 9628 / NBRC 100126 / VC-16).